Consider the following 590-residue polypeptide: EGF-like and EMI domain-containing protein 1 (590 aa).

A signal peptide spans 1 to 23 (MTSPLCFWCFCVWAAANWPPGSA). Residues 44 to 104 (LSRPCAQAFI…RCCPGWIQWD (61 aa)) form the EMI domain. An EGF-like 1 domain is found at 105-145 (DEPGCFSSLSSLGTHFSGRECSYQDTRQCLCSQGFHGPHCQ). Cystine bridges form between C109–C125, C135–C144, C168–C179, C175–C188, C190–C203, C209–C219, C215–C228, C230–C243, C249–C260, C256–C269, and C271–C284. The EGF-like 2; calcium-binding domain occupies 164-204 (NVDECAVVNGGCQQRCINTLGTFHCECDTGYRRHADERTCI). An EGF-like 3 domain is found at 205–244 (KTDPCAGANGCAHLCQTENGMARCACHAGYQLSEDKKACE). The 41-residue stretch at 245-285 (DINECAGELAPCAHHCVNSKGSFTCTCHPGFELGADRKHCY) folds into the EGF-like 4; calcium-binding domain. Residues 393-424 (RLAQNPPQPFPYLDPSLTASYEDEDNDDADSE) are disordered. Acidic residues predominate over residues 413-424 (YEDEDNDDADSE). The 37-residue stretch at 445 to 481 (FGLDCSLSCEDCMNGGRCQEGKSGCLCPAEWTGLICN) folds into the EGF-like 5 domain. Intrachain disulfides connect C449/C462, C456/C469, and C471/C480.

The protein is EGF-like and EMI domain-containing protein 1 (Egfem1) of Mus musculus (Mouse).